The sequence spans 72 residues: DNA-directed RNA polymerase subunit omega (72 aa).

It belongs to the RNA polymerase subunit omega family. In terms of assembly, the RNAP catalytic core consists of 2 alpha, 1 beta, 1 beta' and 1 omega subunit. When a sigma factor is associated with the core the holoenzyme is formed, which can initiate transcription.

It catalyses the reaction RNA(n) + a ribonucleoside 5'-triphosphate = RNA(n+1) + diphosphate. Promotes RNA polymerase assembly. Latches the N- and C-terminal regions of the beta' subunit thereby facilitating its interaction with the beta and alpha subunits. This is DNA-directed RNA polymerase subunit omega from Francisella philomiragia subsp. philomiragia (strain ATCC 25017 / CCUG 19701 / FSC 153 / O#319-036).